Consider the following 308-residue polypeptide: Vomeronasal type-1 receptor 92 (308 aa).

Residues 1-18 (MNKDNTLHTIMKITMFSE) are Extracellular-facing. A helical transmembrane segment spans residues 19–39 (VSVGISANSILFFAHLCMLLG). Residues 40 to 48 (ENRPKPFHL) lie on the Cytoplasmic side of the membrane. Residues 49 to 69 (YIVSLSLTQLILLITMGLIAV) traverse the membrane as a helical segment. At 70 to 91 (DMFMSWGRWDSTPCQSLIYLHR) the chain is on the extracellular side. Residues cysteine 83 and cysteine 170 are joined by a disulfide bond. A helical membrane pass occupies residues 92–112 (LLRGFTLCAACLLNVFWMITL). At 113–132 (SPRSSCLSKFKHNSPHHISG) the chain is on the cytoplasmic side. The helical transmembrane segment at 133-153 (AFLFLCVLYMSFSSHLLVSII) threads the bilayer. Residues 154 to 188 (ATPNLTSNIFMYVTQSCSLLPMSYSRTSTFSTTIA) lie on the Extracellular side of the membrane. Asparagine 157 carries an N-linked (GlcNAc...) asparagine glycan. Residues 189–209 (IREAFLISLMALSSGFMVTLL) traverse the membrane as a helical segment. Residues 210–236 (WRHKKQAQHLHSTSLSSKASPERRATR) lie on the Cytoplasmic side of the membrane. The helical transmembrane segment at 237 to 257 (TILLLMSFFVVLYILENVVFY) threads the bilayer. At 258–267 (SRMKFKDGSM) the chain is on the extracellular side. Residues 268-288 (FYCVQIIVSHSYATISPFVFI) form a helical membrane-spanning segment. At 289–308 (CTEKHMTKILRSVCTRIINI) the chain is on the cytoplasmic side.

The protein belongs to the G-protein coupled receptor 1 family.

It localises to the cell membrane. In terms of biological role, putative pheromone receptor implicated in the regulation of social as well as reproductive behavior. The chain is Vomeronasal type-1 receptor 92 (Vom1r92) from Rattus norvegicus (Rat).